The following is a 366-amino-acid chain: Isopropyl malate dehydrogenase htyC (366 aa).

71–73 (VGG) serves as a coordination point for NADP(+). Residues Arg-91 and Arg-130 each contribute to the substrate site. The Mg(2+) site is built by Asp-221, Asp-246, and Asp-250. 277–282 (GCVHGI) contributes to the NADP(+) binding site.

This sequence belongs to the isocitrate and isopropylmalate dehydrogenases family. In terms of assembly, homodimer. The cofactor is Mg(2+). Requires Mn(2+) as cofactor.

The catalysed reaction is (2R,3S)-3-isopropylmalate + NAD(+) = 4-methyl-2-oxopentanoate + CO2 + NADH. Its pathway is antifungal biosynthesis. Isopropyl malate dehydrogenase; part of the gene cluster that mediates the de novo generation of L-homotyrosine from acetyl-CoA and 4-hydroxyphenyl-pyruvate. L-homotyrosine is a building block of echinocandin B, a fungal lipidated cyclic hexapeptide that acts as an antifungal agent. L-homotyrosine 4-hydroxyphenyl-pyruvate first undergoes an aldol-type condensation by htyA with the C-2 of acetyl-CoA followed by the release of CoA to form 2-(4-hydroxybenzyl)-malate. This is followed by isomerization of 2-(4-hydroxy-benzyl)-malate to 3-(4-hydroxybenzyl)-malate by htyD. Thereafter, 3-(4-hydroxybenzyl)-malate undergoes decarboxylation and oxidation to form 2-oxo-4-(4-hydroxybenzyl)butanoic acid, coupled to reduction of NAD(+) to NADH by htyC. The product then undergoes transamination catalyzed by htyB to form L-homotyrosine. The sequence is that of Isopropyl malate dehydrogenase htyC from Aspergillus rugulosus (Emericella rugulosa).